A 70-amino-acid chain; its full sequence is PPF2L antigen (70 aa).

The chain is PPF2L antigen from Plasmodium falciparum (isolate Palo Alto / Uganda).